Here is a 350-residue protein sequence, read N- to C-terminus: MTSATTAPHTTQTLQFHPRVAESVATQRGEGWSIQAVQELLDLPFMELLWRAQATHRAHWPQGDIELATLLSVKTGGCPENCGYCPQSAEFDTGVKAEKLMSVQEVTQAAQAAKDAGATRFCMGAAWRAPKDRDIEKMSELITAVKDLGLQTCATLGMLQSHQALALKDAGLDYYNHNLDTAPEYYSDVVSTRQYQDRLDTLRHVRDAGINVCCGGIVGMGEAPVHRAGLIAQLANLNPYPESVPINSLVRVAGTPLANSEPVDPLDFVRVIAVARITMPKARVRLSAGRQQLGDAVQALCFLAGANSIFYGDKLLVTSNPDVEADTQLLAKLGLKGTPNQTTTETACGA.

The 219-residue stretch at 63–281 folds into the Radical SAM core domain; that stretch reads GDIELATLLS…IAVARITMPK (219 aa). 3 residues coordinate [4Fe-4S] cluster: Cys-78, Cys-82, and Cys-85. 4 residues coordinate [2Fe-2S] cluster: Cys-122, Cys-153, Cys-213, and Arg-285.

The protein belongs to the radical SAM superfamily. Biotin synthase family. In terms of assembly, homodimer. [4Fe-4S] cluster serves as cofactor. Requires [2Fe-2S] cluster as cofactor.

It catalyses the reaction (4R,5S)-dethiobiotin + (sulfur carrier)-SH + 2 reduced [2Fe-2S]-[ferredoxin] + 2 S-adenosyl-L-methionine = (sulfur carrier)-H + biotin + 2 5'-deoxyadenosine + 2 L-methionine + 2 oxidized [2Fe-2S]-[ferredoxin]. Its pathway is cofactor biosynthesis; biotin biosynthesis; biotin from 7,8-diaminononanoate: step 2/2. Catalyzes the conversion of dethiobiotin (DTB) to biotin by the insertion of a sulfur atom into dethiobiotin via a radical-based mechanism. In Acidovorax ebreus (strain TPSY) (Diaphorobacter sp. (strain TPSY)), this protein is Biotin synthase.